A 530-amino-acid polypeptide reads, in one-letter code: Phosphoenolpyruvate carboxykinase (ATP) 2 (530 aa).

The substrate site is built by R54, Y191, and K197. ATP is bound by residues K197, H216, and 232–240 (GLSGTGKTT). K197 and H216 together coordinate Mn(2+). D253 is a binding site for Mn(2+). ATP is bound by residues E281, R318, 437–438 (RV), and T443. R318 is a binding site for substrate.

The protein belongs to the phosphoenolpyruvate carboxykinase (ATP) family. Mn(2+) serves as cofactor.

Its subcellular location is the cytoplasm. The enzyme catalyses oxaloacetate + ATP = phosphoenolpyruvate + ADP + CO2. The protein operates within carbohydrate biosynthesis; gluconeogenesis. Involved in the gluconeogenesis. Catalyzes the conversion of oxaloacetate (OAA) to phosphoenolpyruvate (PEP) through direct phosphoryl transfer between the nucleoside triphosphate and OAA. In Salinibacter ruber (strain DSM 13855 / M31), this protein is Phosphoenolpyruvate carboxykinase (ATP) 2.